Here is an 81-residue protein sequence, read N- to C-terminus: Sulfur carrier protein TusA (81 aa).

The active-site Cysteine persulfide intermediate is the cysteine 19.

It belongs to the sulfur carrier protein TusA family. As to quaternary structure, interacts with IscS.

It localises to the cytoplasm. It participates in tRNA modification. Sulfur carrier protein involved in sulfur trafficking in the cell. Part of a sulfur-relay system required for 2-thiolation during synthesis of 2-thiouridine of the modified wobble base 5-methylaminomethyl-2-thiouridine (mnm(5)s(2)U) in tRNA. Interacts with IscS and stimulates its cysteine desulfurase activity. Accepts an activated sulfur from IscS, which is then transferred to TusD, and thus determines the direction of sulfur flow from IscS to 2-thiouridine formation. Also appears to be involved in sulfur transfer for the biosynthesis of molybdopterin. This chain is Sulfur carrier protein TusA, found in Enterobacter sp. (strain 638).